Here is a 436-residue protein sequence, read N- to C-terminus: Glutamyl-tRNA reductase (436 aa).

Residues 49–52, serine 109, 114–116, and glutamine 120 contribute to the substrate site; these read TCNR and EGQ. Cysteine 50 acts as the Nucleophile in catalysis. An NADP(+)-binding site is contributed by 198–203; the sequence is GAGRMS.

It belongs to the glutamyl-tRNA reductase family. In terms of assembly, homodimer.

The catalysed reaction is (S)-4-amino-5-oxopentanoate + tRNA(Glu) + NADP(+) = L-glutamyl-tRNA(Glu) + NADPH + H(+). It participates in porphyrin-containing compound metabolism; protoporphyrin-IX biosynthesis; 5-aminolevulinate from L-glutamyl-tRNA(Glu): step 1/2. It functions in the pathway porphyrin-containing compound metabolism; chlorophyll biosynthesis. Its function is as follows. Catalyzes the NADPH-dependent reduction of glutamyl-tRNA(Glu) to glutamate 1-semialdehyde (GSA). In Prochlorococcus marinus (strain MIT 9301), this protein is Glutamyl-tRNA reductase.